We begin with the raw amino-acid sequence, 83 residues long: Small ribosomal subunit protein bS16 (83 aa).

It belongs to the bacterial ribosomal protein bS16 family.

In Magnetococcus marinus (strain ATCC BAA-1437 / JCM 17883 / MC-1), this protein is Small ribosomal subunit protein bS16.